A 1045-amino-acid polypeptide reads, in one-letter code: E3 ubiquitin-protein ligase Topors (1045 aa).

Positions 1–35 (MGSQPPLGSPLSREEGEAPPPAPASEGRRRSRRVR) are disordered. Residues 1–195 (MGSQPPLGSP…RERNASVYSP (195 aa)) are E3 ubiquitin-protein ligase activity. The interval 51 to 374 (ELAASAPARP…MAAFDQHANY (324 aa)) is required for DNA-binding. Glycyl lysine isopeptide (Lys-Gly) (interchain with G-Cter in SUMO2) cross-links involve residues K73, K76, K83, and K88. Phosphoserine is present on S98. Residues 103-142 (CPICLDRFDNVSYLDRCLHKFCFRCVQEWSKNKAECPLCK) form an RING-type zinc finger. Residue K159 forms a Glycyl lysine isopeptide (Lys-Gly) (interchain with G-Cter in SUMO2) linkage. Position 194 is a phosphoserine (S194). K249 is covalently cross-linked (Glycyl lysine isopeptide (Lys-Gly) (interchain with G-Cter in SUMO2)). The interval 437–574 (SLLNTSDSSD…STSLSSPRNL (138 aa)) is required for sumoylation and localization to discrete nuclear foci. Positions 437 to 654 (SLLNTSDSSD…RSRTRDSSWS (218 aa)) are interaction with SUMO1. The disordered stretch occupies residues 442–475 (SDSSDEELVTGGATSQIQGVQTNDDLNNDSDDSS). Positions 453 to 463 (GATSQIQGVQT) are enriched in polar residues. An interaction with p53/TP53 region spans residues 456-731 (SQIQGVQTND…RRTLSRAHYS (276 aa)). Positions 456–882 (SQIQGVQTND…GKATDTTKHH (427 aa)) are interaction with TOP1. The residue at position 499 (S499) is a Phosphoserine. The tract at residues 511–692 (ETVKTQEQEQ…RSRNRDRYYL (182 aa)) is disordered. The span at 521–534 (SYSSGDSDVSRCSS) shows a compositional bias: low complexity. The segment covering 539–565 (LGKDEQINKGHCDSSTRIKSKKEEKRS) has biased composition (basic and acidic residues). Residue K560 forms a Glycyl lysine isopeptide (Lys-Gly) (interchain with G-Cter in SUMO) linkage. Residues 566 to 578 (TSLSSPRNLNSSV) show a composition bias toward polar residues. S585 is modified (phosphoserine). 3 stretches are compositionally biased toward basic residues: residues 588–597 (NHRHRKRGRS), 613–630 (KNHRKHHGKKRMKSKRSR), and 637–647 (PRGRRDKKRSR). Residues 654–669 (SRRSQTLSLSSESTSR) are compositionally biased toward low complexity. A Glycyl lysine isopeptide (Lys-Gly) (interchain with G-Cter in SUMO2) cross-link involves residue K701. The interval 713-936 (RDGYESSYRR…DNSGPQDPLQ (224 aa)) is disordered. The residue at position 718 (S718) is a Phosphoserine; by PLK1. A compositionally biased stretch (basic residues) spans 721-730 (RRRTLSRAHY). A compositionally biased stretch (polar residues) spans 731 to 747 (SRQSSSPEFRVQSFSER). S734 carries the post-translational modification Phosphoserine. Basic and acidic residues-rich tracts occupy residues 755–766 (NHSERKYYYYER) and 816–825 (FASKAKDSHY). Residues K819 and K837 each participate in a glycyl lysine isopeptide (Lys-Gly) (interchain with G-Cter in SUMO2) cross-link. Basic residues predominate over residues 854-863 (KHKRRKRKTR). The segment at 854–917 (KHKRRKRKTR…ITIDSDSDKD (64 aa)) is interaction with UBE2I. 2 positions are modified to phosphoserine: S864 and S866. Residues 880–897 (KHHKKKKKKHKKKHKKHH) show a composition bias toward basic residues. Phosphoserine is present on residues S912, S914, and S1028. Residues 913 to 923 (DSDKDSEVKED) are compositionally biased toward basic and acidic residues.

Interacts with PARK7/DJ-1. Interacts with TOP1. Interacts with p53/TP53; can both ubiquitinate and sumoylate p53/TP53. Interacts with the SUMO1 conjugating enzyme UBE2I. Interacts with SUMO1. Interacts with NKX3-1; polyubiquitinates NKX3-1 and induces its proteasomal degradation. Interacts with SIN3A; sumoylates SIN3A. Interacts with IKBKE; induced by DNA damage. In terms of processing, phosphorylation at Ser-98 regulates the E3 ubiquitin-protein ligase activity but not the SUMO1-protein ligase activity. Phosphorylation at Ser-718 increases the E3 ubiquitin-protein ligase activity versus the SUMO1-protein ligase activity resulting in increased p53/TP53 ubiquitination and degradation. Post-translationally, sumoylated. Expressed at highest levels in testis and at lower levels in adrenal gland, bone marrow, brain, colon, heart, kidney, liver, muscle, ovary, pancreas, placenta, prostate, skeletal muscle, skin, small intestine, spleen, stomach, testis, thymus, thyroid and uterus. Expressed in the alveolar epithelium of the lung. Expression is commonly decreased in colon adenocarcinomas and lung cancers.

It localises to the nucleus. It is found in the PML body. It carries out the reaction S-ubiquitinyl-[E2 ubiquitin-conjugating enzyme]-L-cysteine + [acceptor protein]-L-lysine = [E2 ubiquitin-conjugating enzyme]-L-cysteine + N(6)-ubiquitinyl-[acceptor protein]-L-lysine.. Its function is as follows. Functions as an E3 ubiquitin-protein ligase and as an E3 SUMO1-protein ligase. Probable tumor suppressor involved in cell growth, cell proliferation and apoptosis that regulates p53/TP53 stability through ubiquitin-dependent degradation. May regulate chromatin modification through sumoylation of several chromatin modification-associated proteins. May be involved in DNA damage-induced cell death through IKBKE sumoylation. The protein is E3 ubiquitin-protein ligase Topors (TOPORS) of Homo sapiens (Human).